A 426-amino-acid polypeptide reads, in one-letter code: Histidine--tRNA ligase (426 aa).

It belongs to the class-II aminoacyl-tRNA synthetase family. As to quaternary structure, homodimer.

The protein resides in the cytoplasm. The enzyme catalyses tRNA(His) + L-histidine + ATP = L-histidyl-tRNA(His) + AMP + diphosphate + H(+). The protein is Histidine--tRNA ligase of Streptococcus thermophilus (strain ATCC BAA-491 / LMD-9).